Consider the following 260-residue polypeptide: uncharacterized protein (260 aa).

This is an uncharacterized protein from Saccharomyces cerevisiae (strain ATCC 204508 / S288c) (Baker's yeast).